The sequence spans 174 residues: Peptide deformylase (174 aa).

Positions 98 and 140 each coordinate Fe cation. Glu-141 is a catalytic residue. His-144 contributes to the Fe cation binding site.

This sequence belongs to the polypeptide deformylase family. It depends on Fe(2+) as a cofactor.

It carries out the reaction N-terminal N-formyl-L-methionyl-[peptide] + H2O = N-terminal L-methionyl-[peptide] + formate. Functionally, removes the formyl group from the N-terminal Met of newly synthesized proteins. Requires at least a dipeptide for an efficient rate of reaction. N-terminal L-methionine is a prerequisite for activity but the enzyme has broad specificity at other positions. This Bradyrhizobium diazoefficiens (strain JCM 10833 / BCRC 13528 / IAM 13628 / NBRC 14792 / USDA 110) protein is Peptide deformylase.